The primary structure comprises 232 residues: Biosynthetic peptidoglycan transglycosylase (232 aa).

Residues 12 to 31 (YLLWFMAASVVLVAVLRWVP) form a helical membrane-spanning segment.

This sequence belongs to the glycosyltransferase 51 family.

The protein localises to the cell inner membrane. The catalysed reaction is [GlcNAc-(1-&gt;4)-Mur2Ac(oyl-L-Ala-gamma-D-Glu-L-Lys-D-Ala-D-Ala)](n)-di-trans,octa-cis-undecaprenyl diphosphate + beta-D-GlcNAc-(1-&gt;4)-Mur2Ac(oyl-L-Ala-gamma-D-Glu-L-Lys-D-Ala-D-Ala)-di-trans,octa-cis-undecaprenyl diphosphate = [GlcNAc-(1-&gt;4)-Mur2Ac(oyl-L-Ala-gamma-D-Glu-L-Lys-D-Ala-D-Ala)](n+1)-di-trans,octa-cis-undecaprenyl diphosphate + di-trans,octa-cis-undecaprenyl diphosphate + H(+). Its pathway is cell wall biogenesis; peptidoglycan biosynthesis. In terms of biological role, peptidoglycan polymerase that catalyzes glycan chain elongation from lipid-linked precursors. In Pseudomonas aeruginosa (strain ATCC 15692 / DSM 22644 / CIP 104116 / JCM 14847 / LMG 12228 / 1C / PRS 101 / PAO1), this protein is Biosynthetic peptidoglycan transglycosylase.